A 221-amino-acid chain; its full sequence is Small ribosomal subunit protein uS2c (221 aa).

The protein belongs to the universal ribosomal protein uS2 family.

It localises to the plastid. It is found in the chloroplast. The chain is Small ribosomal subunit protein uS2c (rps2) from Cyanidioschyzon merolae (strain NIES-3377 / 10D) (Unicellular red alga).